A 196-amino-acid polypeptide reads, in one-letter code: Molybdopterin synthase catalytic subunit (196 aa).

The segment at 1–29 (MSTLPSTDPPPLPASTSSQQPAVHIPPPS) is disordered. Substrate-binding positions include 145–146 (HR), Lys161, and 168–170 (KRE). A disordered region spans residues 174 to 196 (GEPPGQGEWRANRDTDPEGKSTS). The segment covering 183-196 (RANRDTDPEGKSTS) has biased composition (basic and acidic residues).

Belongs to the MoaE family. MOCS2B subfamily. Heterotetramer; composed of 2 small (MOCS2A) and 2 large (MOCS2B) subunits.

Its subcellular location is the cytoplasm. It carries out the reaction 2 [molybdopterin-synthase sulfur-carrier protein]-C-terminal-Gly-aminoethanethioate + cyclic pyranopterin phosphate + H2O = molybdopterin + 2 [molybdopterin-synthase sulfur-carrier protein]-C-terminal Gly-Gly + 2 H(+). It functions in the pathway cofactor biosynthesis; molybdopterin biosynthesis. In terms of biological role, catalytic subunit of the molybdopterin synthase complex, a complex that catalyzes the conversion of precursor Z into molybdopterin. Acts by mediating the incorporation of 2 sulfur atoms from thiocarboxylated MOCS2A into precursor Z to generate a dithiolene group. The polypeptide is Molybdopterin synthase catalytic subunit (Coccidioides immitis (strain RS) (Valley fever fungus)).